Here is a 619-residue protein sequence, read N- to C-terminus: Probable ATP-dependent RNA helicase DDX59 (619 aa).

K26 participates in a covalent cross-link: Glycyl lysine isopeptide (Lys-Gly) (interchain with G-Cter in SUMO2). Positions 57–98 (SESCPFPSPGGQLAEVHSVSPEQGAKDSHPSEEPVKSFSKTQ) are disordered. Phosphoserine occurs at positions 64 and 76. The span at 80–91 (GAKDSHPSEEPV) shows a compositional bias: basic and acidic residues. The HIT-type zinc-finger motif lies at 104-133 (GEPICVVCGRYGEYICDKTDEDVCSLECKA). Residues 142 to 161 (KEEKSKLSNPQKADSEPESP) are disordered. Residues S156 and S160 each carry the phosphoserine modification. The Q motif motif lies at 203 to 231 (IDFEHCSLPEVLNHNLKKSGYEVPTPIQM). Residues 234–405 (IPVGLLGRDI…SQLLHNPVRI (172 aa)) enclose the Helicase ATP-binding domain. Residue 247 to 254 (ADTGSGKT) participates in ATP binding. The DEAD box signature appears at 353-356 (DEAD). One can recognise a Helicase C-terminal domain in the interval 416–579 (NVRQIILWVE…ILPPQLLNSP (164 aa)).

This sequence belongs to the DEAD box helicase family. DDX59 subfamily. In terms of assembly, interacts (via HIT-type zinc finger) with the RUVBL1/RUVBL2 complex in the presence of ADP. As to expression, expressed in fibroblasts (at protein level).

The protein resides in the cytoplasm. Its subcellular location is the nucleus. The enzyme catalyses ATP + H2O = ADP + phosphate + H(+). The protein is Probable ATP-dependent RNA helicase DDX59 (DDX59) of Homo sapiens (Human).